A 162-amino-acid polypeptide reads, in one-letter code: Cyclic pyranopterin monophosphate synthase (162 aa).

Substrate is bound by residues 75 to 77 (MCH) and 115 to 116 (ME). The active site involves Asp130.

The protein belongs to the MoaC family. Homohexamer; trimer of dimers.

The catalysed reaction is (8S)-3',8-cyclo-7,8-dihydroguanosine 5'-triphosphate = cyclic pyranopterin phosphate + diphosphate. It functions in the pathway cofactor biosynthesis; molybdopterin biosynthesis. In terms of biological role, catalyzes the conversion of (8S)-3',8-cyclo-7,8-dihydroguanosine 5'-triphosphate to cyclic pyranopterin monophosphate (cPMP). This Geobacillus kaustophilus (strain HTA426) protein is Cyclic pyranopterin monophosphate synthase.